The sequence spans 428 residues: Gamma-glutamyl phosphate reductase (428 aa).

This sequence belongs to the gamma-glutamyl phosphate reductase family.

The protein localises to the cytoplasm. The catalysed reaction is L-glutamate 5-semialdehyde + phosphate + NADP(+) = L-glutamyl 5-phosphate + NADPH + H(+). It participates in amino-acid biosynthesis; L-proline biosynthesis; L-glutamate 5-semialdehyde from L-glutamate: step 2/2. In terms of biological role, catalyzes the NADPH-dependent reduction of L-glutamate 5-phosphate into L-glutamate 5-semialdehyde and phosphate. The product spontaneously undergoes cyclization to form 1-pyrroline-5-carboxylate. The protein is Gamma-glutamyl phosphate reductase of Mesorhizobium japonicum (strain LMG 29417 / CECT 9101 / MAFF 303099) (Mesorhizobium loti (strain MAFF 303099)).